A 109-amino-acid polypeptide reads, in one-letter code: Co-chaperonin GroES (109 aa).

Belongs to the GroES chaperonin family. As to quaternary structure, heptamer of 7 subunits arranged in a ring. Interacts with the chaperonin GroEL.

The protein localises to the cytoplasm. Functionally, together with the chaperonin GroEL, plays an essential role in assisting protein folding. The GroEL-GroES system forms a nano-cage that allows encapsulation of the non-native substrate proteins and provides a physical environment optimized to promote and accelerate protein folding. GroES binds to the apical surface of the GroEL ring, thereby capping the opening of the GroEL channel. The sequence is that of Co-chaperonin GroES from Methanosarcina acetivorans (strain ATCC 35395 / DSM 2834 / JCM 12185 / C2A).